The following is a 238-amino-acid chain: CASP-like protein 2BC2 (238 aa).

At 1-66 (MPSSTYPRRR…FHQKVAVEKR (66 aa)) the chain is on the cytoplasmic side. The helical transmembrane segment at 67 to 87 (LKIGEVILRFAMIALALVAAV) threads the bilayer. The Extracellular portion of the chain corresponds to 88 to 111 (RVGTDTQTRTIFTIEKKAKYSDMK). A helical transmembrane segment spans residues 112–132 (ALVFLVVMNGIVASYSLLQGL). The Cytoplasmic portion of the chain corresponds to 133–148 (RCVLSIYTQSPLTSKP). A helical transmembrane segment spans residues 149–169 (LAWLIFALDQTMAYFSLAAAA). Residues 170 to 200 (AAAESAYLAERGQTEFQWMKVCIFYEKFCHQ) lie on the Extracellular side of the membrane. A helical transmembrane segment spans residues 201–221 (IGEGLVSTFLVSLSMATVSGM). Residues 222-238 (SAYHLFRLYGSKGKSIQ) are Cytoplasmic-facing.

This sequence belongs to the Casparian strip membrane proteins (CASP) family. Homodimer and heterodimers.

It localises to the cell membrane. The chain is CASP-like protein 2BC2 from Picea sitchensis (Sitka spruce).